Here is a 498-residue protein sequence, read N- to C-terminus: Myocyte-specific enhancer factor 2A (498 aa).

An MADS-box domain is found at 3–57; that stretch reads RKKIQITRIMDERNRQVTFTKRKFGLMKKAYELSVLCDCEIALIIFNSSNKLFQY. Positions 58–86 form a DNA-binding region, mef2-type; that stretch reads ASTDMDKVLLKYTEYNEPHESRTNSDIVE. Ser59 is subject to Phosphoserine; by CK2. 2 positions are modified to phosphoserine: Ser98 and Ser108. Ser108 is modified (phosphothreonine). The interval 172-220 is disordered; that stretch reads LADSSMLSPPPATLHRNVSPGAPQRPPSTGSASGMLSTTDLTVPNGAGN. Polar residues predominate over residues 198-220; that stretch reads PSTGSASGMLSTTDLTVPNGAGN. At Ser233 the chain carries Phosphoserine. The interval 240–268 is disordered; that stretch reads TGANSLGKVMPTKSPPPPGGGSLGMNSRK. N6-acetyllysine is present on Lys247. The residue at position 253 (Ser253) is a Phosphoserine. The tract at residues 264 to 281 is required for interaction with MAPKs; it reads MNSRKPDLRVVIPPSSKG. The tract at residues 287 to 294 is beta domain; the sequence is SEEEELEL. A phosphothreonine; by MAPK7 mark is found at Thr310 and Thr317. Thr310 is modified (phosphothreonine; by NLK). Ser353 bears the Phosphoserine; by MAPK7 mark. A compositionally biased stretch (polar residues) spans 388–400; sequence SNLSINTNQNINI. The segment at 388-498 is disordered; that stretch reads SNLSINTNQN…KRMRMDTWVT (111 aa). At Lys401 the chain carries N6-acetyllysine; alternate. Residue Lys401 forms a Glycyl lysine isopeptide (Lys-Gly) (interchain with G-Cter in SUMO); alternate linkage. Residue Ser406 is modified to Phosphoserine. Thr413 bears the Phosphothreonine mark. The segment covering 426 to 436 has biased composition (pro residues); it reads QQPPPQPPQPQ. Ser444 carries the phosphoserine modification. The segment covering 444-457 has biased composition (low complexity); it reads SPVDSLSSSSSSYD. 2 stretches are compositionally biased toward basic and acidic residues: residues 458 to 468 and 479 to 498; these read GSDREDPRGDF and NTEDRESPSVKRMRMDTWVT.

It belongs to the MEF2 family. As to quaternary structure, binds DNA as a homo- or heterodimer. Dimerizes with MEF2D. Interacts with HDAC7. Interacts with PIAS1; the interaction enhances sumoylation. Interacts with HDAC4, HDAC9 and SLC2A4RG. Interacts (via the N-terminal) with MAPK7; the interaction results in the phosphorylation and transcriptional activity of MEF2A. Constitutive phosphorylation on Ser-406 promotes Lys-401 sumoylation thus preventing acetylation at this site. Dephosphorylation on Ser-406 by PPP3CA upon neuron depolarization promotes a switch from sumoylation to acetylation on residue Lys-403 leading to inhibition of dendrite claw differentiation. Phosphorylation on Thr-312 and Thr-319 are the main sites involved in p38 MAPK signaling and activate transcription. Phosphorylated on these sites by MAPK14/p38alpha and MAPK11/p38beta, but not by MAPK13/p38delta nor by MAPK12/p38gamma. Phosphorylation on Ser-408 by CDK5 induced by neurotoxicity inhibits MEF2A transcriptional activation leading to apoptosis of cortical neurons. Phosphorylation on Thr-312, Thr-319 and Ser-355 can be induced by EGF. Isoform 3 is phosphorylated on Ser-98 and Thr-108. Post-translationally, sumoylation on Lys-401 is enhanced by PIAS1 and represses transcriptional activity. Phosphorylation on Ser-406 is required for sumoylation. Has no effect on nuclear location nor on DNA binding. Sumoylated with SUMO1 and, to a lesser extent with SUMO2 and SUMO3. PIASx facilitates sumoylation in postsynaptic dendrites in the cerebellar cortex and promotes their morphogenesis. In terms of processing, acetylation on Lys-401 activates transcriptional activity. Acetylated by p300 on several sites in diffentiating myocytes. Acetylation on Lys-4 increases DNA binding and transactivation. Hyperacetylation by p300 leads to enhanced cardiac myocyte growth and heart failure. Proteolytically cleaved in cerebellar granule neurons on several sites by caspase 3 and caspase 7 following neurotoxicity. Preferentially cleaves the CDK5-mediated hyperphosphorylated form which leads to neuron apoptosis and transcriptional inactivation. As to expression, widely expressed though mainly restricted to skeletal and cardiac muscle, brain, neurons and lymphocytes. Differentially expressed depending on if isoforms contain the beta domain or not, with the total expression of the beta domain-lacking isoforms vastly exceeding that of the beta domain-containing isoforms. Isoforms containing the beta domain are expressed primarily in skeletal and cardiac muscle and in brain. Also present in lung and testis. Splicing to include the beta domain is induced in differentiating myocytes. Isoforms lacking the beta domain are expressed less abundantly in skeletal muscle, brain and lymphocytes, and are uniquely found in ovary, liver, spleen and kidney. In embryos, the beta domain-containing and beta domain-lacking isoforms are equally expressed. Also expressed cerebellar granule neurons and other regions of the CNS. Highest levels in the olfactory bulb, cortex, hippocampus, thalamus and cerebellum.

It is found in the nucleus. Functionally, transcriptional activator which binds specifically to the MEF2 element, 5'-YTA[AT](4)TAR-3', found in numerous muscle-specific genes. Also involved in the activation of numerous growth factor- and stress-induced genes. Mediates cellular functions not only in skeletal and cardiac muscle development, but also in neuronal differentiation and survival. Plays diverse roles in the control of cell growth, survival and apoptosis via p38 MAPK signaling in muscle-specific and/or growth factor-related transcription. In cerebellar granule neurons, phosphorylated and sumoylated MEF2A represses transcription of NUR77 promoting synaptic differentiation. Associates with chromatin to the ZNF16 promoter. This Mus musculus (Mouse) protein is Myocyte-specific enhancer factor 2A (Mef2a).